A 387-amino-acid chain; its full sequence is Monomeric sarcosine oxidase (387 aa).

Residue 6-36 participates in FAD binding; the sequence is DVIVVGAGSMGMAAGYYLAKQGVKTLLVDSF. Cys316 bears the S-8alpha-FAD cysteine mark.

The protein belongs to the MSOX/MTOX family. MSOX subfamily. In terms of assembly, monomer. FAD serves as cofactor.

It is found in the cytoplasm. The enzyme catalyses sarcosine + O2 + H2O = formaldehyde + glycine + H2O2. Functionally, catalyzes the oxidative demethylation of sarcosine. The sequence is that of Monomeric sarcosine oxidase (soxA) from Bacillus sp. (strain NS-129).